The primary structure comprises 464 residues: ERO1-like protein alpha (464 aa).

The N-terminal stretch at 1 to 23 (MGRAWGLLVGLLGVVWLLRLGHG) is a signal peptide. Disulfide bonds link Cys35–Cys48, Cys37–Cys46, Cys85–Cys387, Cys94–Cys99, Cys94–Cys130, Cys99–Cys104, Cys207–Cys237, and Cys390–Cys393. 3 positions are modified to phosphoserine: Ser106, Ser142, and Ser144. The FAD site is built by Arg186, Thr188, and Trp199. Positions 248 and 251 each coordinate FAD. N-linked (GlcNAc...) asparagine glycosylation is present at Asn276. Residues Arg283 and Arg296 each contribute to the FAD site. The N-linked (GlcNAc...) asparagine glycan is linked to Asn380.

Belongs to the EROs family. As to quaternary structure, predominantly monomer. May function both as a monomer and a homodimer. Interacts with PDILT. Interacts with ERP44; the interaction results in retention of ERO1A in the endoplasmic reticulum. It depends on FAD as a cofactor. N-glycosylated. In terms of processing, the Cys-94/Cys-99 and Cys-390/Cys-393 disulfide bonds constitute the redox-active center. The Cys-94/Cys-99 disulfide bond may accept electron from P4HB and funnel them to the active site disulfide Cys-390/Cys-393. The regulatory Cys-99/Cys-104 disulfide bond stabilizes the other regulatory bond Cys-94/Cys-130. Post-translationally, phosphorylated on Ser-144 by FAM20C in the Golgi which increases its enzymatic activity. Phosphorylation is induced by lactation. It is also induced by hypoxia and reductive stress. As to expression, widely expressed (at protein level). In the mammary gland, expressed at higher levels in lactating mice than in virgin mice (at protein level).

Its subcellular location is the endoplasmic reticulum membrane. The protein localises to the golgi apparatus lumen. It is found in the secreted. It localises to the cell projection. The protein resides in the dendrite. Enzyme activity is tightly regulated to prevent the accumulation of reactive oxygen species in the endoplasmic reticulum. Reversibly down-regulated by the formation of disulfide bonds between the active site Cys-94 and Cys-130, and between Cys-99 and Cys-104. Glutathione may be required to regulate its activity in the endoplasmic reticulum. Its function is as follows. Oxidoreductase involved in disulfide bond formation in the endoplasmic reticulum. Efficiently reoxidizes P4HB/PDI, the enzyme catalyzing protein disulfide formation, in order to allow P4HB to sustain additional rounds of disulfide formation. Following P4HB reoxidation, passes its electrons to molecular oxygen via FAD, leading to the production of reactive oxygen species (ROS) in the cell. Required for the proper folding of immunoglobulins. Plays an important role in ER stress-induced, CHOP-dependent apoptosis by activating the inositol 1,4,5-trisphosphate receptor IP3R1. The protein is ERO1-like protein alpha of Mus musculus (Mouse).